A 196-amino-acid chain; its full sequence is MADS-box transcription factor 32 (196 aa).

Residues 1–61 (MGRGRSEIKR…GKLYHFLSPT (61 aa)) form the MADS-box domain. Residues 85–175 (RQERRAELEK…CDKIAHAQTL (91 aa)) form the K-box domain.

Its subcellular location is the nucleus. Its function is as follows. Probable transcription factor. This chain is MADS-box transcription factor 32 (MADS32), found in Oryza sativa subsp. japonica (Rice).